The sequence spans 161 residues: Cytochrome c-type biogenesis protein CcmE (161 aa).

Over 1–8 (MNPVRKKR) the chain is Cytoplasmic. A helical; Signal-anchor for type II membrane protein membrane pass occupies residues 9-29 (LYIVLAILCGVSIAVALALTA). The Periplasmic segment spans residues 30-161 (LQENINLFYT…AKGYQQESAQ (132 aa)). Heme contacts are provided by H124 and Y128.

This sequence belongs to the CcmE/CycJ family.

Its subcellular location is the cell inner membrane. Heme chaperone required for the biogenesis of c-type cytochromes. Transiently binds heme delivered by CcmC and transfers the heme to apo-cytochromes in a process facilitated by CcmF and CcmH. This is Cytochrome c-type biogenesis protein CcmE from Ectopseudomonas mendocina (strain ymp) (Pseudomonas mendocina).